The following is a 351-amino-acid chain: Phosphate acyltransferase (351 aa).

This sequence belongs to the PlsX family. As to quaternary structure, homodimer. Probably interacts with PlsY.

The protein localises to the cytoplasm. The catalysed reaction is a fatty acyl-[ACP] + phosphate = an acyl phosphate + holo-[ACP]. It functions in the pathway lipid metabolism; phospholipid metabolism. In terms of biological role, catalyzes the reversible formation of acyl-phosphate (acyl-PO(4)) from acyl-[acyl-carrier-protein] (acyl-ACP). This enzyme utilizes acyl-ACP as fatty acyl donor, but not acyl-CoA. This chain is Phosphate acyltransferase, found in Verminephrobacter eiseniae (strain EF01-2).